The primary structure comprises 551 residues: Putative BTB/POZ domain-containing protein L76 (551 aa).

One can recognise a BTB domain in the interval 19–90 (TDIILEIEDD…FYGQENDVID (72 aa)).

Belongs to the mimivirus BTB/WD family.

The sequence is that of Putative BTB/POZ domain-containing protein L76 from Acanthamoeba polyphaga (Amoeba).